Reading from the N-terminus, the 303-residue chain is Cytosolic Fe-S cluster assembly factor CFD1 (303 aa).

15 to 22 (GKGGVGKS) serves as a coordination point for ATP. The [4Fe-4S] cluster site is built by Cys199 and Cys202.

It belongs to the Mrp/NBP35 ATP-binding proteins family. NUBP2/CFD1 subfamily. As to quaternary structure, heterotetramer of 2 NBP35 and 2 CFD1 chains. [4Fe-4S] cluster is required as a cofactor.

It localises to the cytoplasm. Functionally, component of the cytosolic iron-sulfur (Fe/S) protein assembly (CIA) machinery. Required for maturation of extramitochondrial Fe-S proteins. The NBP35-CFD1 heterotetramer forms a Fe-S scaffold complex, mediating the de novo assembly of an Fe-S cluster and its transfer to target apoproteins. The sequence is that of Cytosolic Fe-S cluster assembly factor CFD1 from Chaetomium globosum (strain ATCC 6205 / CBS 148.51 / DSM 1962 / NBRC 6347 / NRRL 1970) (Soil fungus).